A 378-amino-acid chain; its full sequence is Plant intracellular Ras-group-related LRR protein 8 (378 aa).

The region spanning 10–86 (PTITVQVKFG…VMLMASQGLH (77 aa)) is the Ubiquitin-like domain. A disordered region spans residues 85 to 120 (LHQGDGPITKNSSVPAPSTRRASNVKEAQIQKSDTN). A compositionally biased stretch (polar residues) spans 93–106 (TKNSSVPAPSTRRA). LRR repeat units lie at residues 129 to 152 (WKATGIIALSDSSLKAVPEEVWGC), 153 to 176 (GSSIRVLDVSNNCIEAIPQEIAAL), 178 to 201 (SLQKLILTANDIADGNISWEGLTC), 202 to 225 (VQTLTVLSLSQNRLVTLPSSLGSI), 226 to 250 (THLRELRIANNRLENLPVEIGLLKH), 252 to 271 (EILIANNNRITSLPSSIGGC), 272 to 293 (ESLNEVDLSSNLLAELPEAFGN), 294 to 317 (LQHLKALSVRNNGLTSLPSAFFIK), and 319 to 344 (SQLITLDLHGTEITNDVLRQVDGWEE).

It belongs to the SHOC2 family. As to expression, widely expressed except in panicles.

In terms of biological role, leucine-rich repeat protein that likely mediates protein interactions, possibly in the context of signal transduction. This chain is Plant intracellular Ras-group-related LRR protein 8 (IRL8), found in Oryza sativa subsp. japonica (Rice).